The primary structure comprises 204 residues: ATP phosphoribosyltransferase (204 aa).

It belongs to the ATP phosphoribosyltransferase family. Short subfamily. Heteromultimer composed of HisG and HisZ subunits.

The protein localises to the cytoplasm. It carries out the reaction 1-(5-phospho-beta-D-ribosyl)-ATP + diphosphate = 5-phospho-alpha-D-ribose 1-diphosphate + ATP. The protein operates within amino-acid biosynthesis; L-histidine biosynthesis; L-histidine from 5-phospho-alpha-D-ribose 1-diphosphate: step 1/9. Catalyzes the condensation of ATP and 5-phosphoribose 1-diphosphate to form N'-(5'-phosphoribosyl)-ATP (PR-ATP). Has a crucial role in the pathway because the rate of histidine biosynthesis seems to be controlled primarily by regulation of HisG enzymatic activity. The polypeptide is ATP phosphoribosyltransferase (Staphylococcus aureus (strain MRSA252)).